A 295-amino-acid chain; its full sequence is Protein U26 (295 aa).

A run of 8 helical transmembrane segments spans residues Leu-4 to Phe-24, Ser-31 to Lys-51, Ile-66 to Ile-86, Val-103 to Phe-123, Phe-183 to Met-203, Val-218 to Gly-238, Val-243 to Leu-263, and Phe-274 to Gly-294.

Its subcellular location is the membrane. This is Protein U26 (U26) from Human herpesvirus 6A (strain Uganda-1102) (HHV-6 variant A).